The sequence spans 278 residues: Digeranylgeranylglyceryl phosphate synthase (278 aa).

A run of 8 helical transmembrane segments spans residues 12-32 (LKNC…ASYF), 34-54 (LAMV…CGFG), 92-112 (LVVM…MAVL), 129-149 (IIGN…GGIA), 153-173 (IDVT…REII), 204-224 (FLLI…FFGI), 226-246 (YMIS…KLVF), and 257-277 (SRNI…GSLF).

Belongs to the UbiA prenyltransferase family. DGGGP synthase subfamily. Mg(2+) serves as cofactor.

The protein localises to the cell membrane. The enzyme catalyses sn-3-O-(geranylgeranyl)glycerol 1-phosphate + (2E,6E,10E)-geranylgeranyl diphosphate = 2,3-bis-O-(geranylgeranyl)-sn-glycerol 1-phosphate + diphosphate. Its pathway is membrane lipid metabolism; glycerophospholipid metabolism. Functionally, prenyltransferase that catalyzes the transfer of the geranylgeranyl moiety of geranylgeranyl diphosphate (GGPP) to the C2 hydroxyl of (S)-3-O-geranylgeranylglyceryl phosphate (GGGP). This reaction is the second ether-bond-formation step in the biosynthesis of archaeal membrane lipids. This Methanococcus maripaludis (strain DSM 14266 / JCM 13030 / NBRC 101832 / S2 / LL) protein is Digeranylgeranylglyceryl phosphate synthase.